The primary structure comprises 236 residues: Purine nucleoside phosphorylase DeoD-type (236 aa).

H5 contributes to the a purine D-ribonucleoside binding site. Phosphate is bound by residues G21, R25, R44, and 88-91 (RVGT). Residues 180-182 (DME) and 204-205 (SD) each bind a purine D-ribonucleoside. Catalysis depends on D205, which acts as the Proton donor.

This sequence belongs to the PNP/UDP phosphorylase family. Homohexamer; trimer of homodimers.

The enzyme catalyses a purine D-ribonucleoside + phosphate = a purine nucleobase + alpha-D-ribose 1-phosphate. The catalysed reaction is a purine 2'-deoxy-D-ribonucleoside + phosphate = a purine nucleobase + 2-deoxy-alpha-D-ribose 1-phosphate. Its function is as follows. Catalyzes the reversible phosphorolytic breakdown of the N-glycosidic bond in the beta-(deoxy)ribonucleoside molecules, with the formation of the corresponding free purine bases and pentose-1-phosphate. The protein is Purine nucleoside phosphorylase DeoD-type of Buchnera aphidicola subsp. Schizaphis graminum (strain Sg).